Reading from the N-terminus, the 347-residue chain is Ribosomal RNA small subunit methyltransferase C (347 aa).

This sequence belongs to the methyltransferase superfamily. RsmC family. Monomer.

It is found in the cytoplasm. The enzyme catalyses guanosine(1207) in 16S rRNA + S-adenosyl-L-methionine = N(2)-methylguanosine(1207) in 16S rRNA + S-adenosyl-L-homocysteine + H(+). Specifically methylates the guanine in position 1207 of 16S rRNA in the 30S particle. This Shewanella baltica (strain OS185) protein is Ribosomal RNA small subunit methyltransferase C.